The following is a 227-amino-acid chain: Uracil-DNA glycosylase (227 aa).

The active-site Proton acceptor is the aspartate 68.

Belongs to the uracil-DNA glycosylase (UDG) superfamily. UNG family.

The protein localises to the cytoplasm. It catalyses the reaction Hydrolyzes single-stranded DNA or mismatched double-stranded DNA and polynucleotides, releasing free uracil.. Functionally, excises uracil residues from the DNA which can arise as a result of misincorporation of dUMP residues by DNA polymerase or due to deamination of cytosine. This is Uracil-DNA glycosylase from Mycobacterium ulcerans (strain Agy99).